The chain runs to 149 residues: QVFGEGMFDYDLFPFLTSTVSPHYRHGLLRGFMDSGISEVRSDRDRFTINLDVKHFSPDDLTVKILDDFVEIHGKHSERQDDHGYISREFHRRYRLPSNLDQSSISCSLSADGILTFSGPKMMSNLVSSHSERPIPVSREEKPTSAPSS.

Residues 28–138 (LLRGFMDSGI…SHSERPIPVS (111 aa)) form the sHSP domain. Histidine 55, histidine 76, glutamate 78, histidine 83, histidine 91, and histidine 130 together coordinate Zn(2+). Residues 125–149 (NLVSSHSERPIPVSREEKPTSAPSS) are disordered. Positions 130–143 (HSERPIPVSREEKP) are enriched in basic and acidic residues. O-linked (GlcNAc) serine glycosylation is present at serine 138.

It belongs to the small heat shock protein (HSP20) family. As to quaternary structure, heteropolymer composed of three CRYAA and one CRYAB subunits. Inter-subunit bridging via zinc ions enhances stability, which is crucial as there is no protein turn over in the lens. Can also form homodimers and homotetramers (dimers of dimers) which serve as the building blocks of homooligomers. Within homooligomers, the zinc-binding motif is created from residues of 3 different molecules. His-76 and Glu-78 from one molecule are ligands of the zinc ion, and His-83 and His-130 residues from additional molecules complete the site with tetrahedral coordination geometry.

It localises to the cytoplasm. Its subcellular location is the nucleus. In terms of biological role, contributes to the transparency and refractive index of the lens. May act as a chaperone, preventing aggregation of various proteins under a wide range of stress conditions. This Rana temporaria (European common frog) protein is Alpha-crystallin A chain (CRYAA).